A 377-amino-acid chain; its full sequence is MAITVNTNVAALVAQRHLTSATDMLNQSMERLSSGKRINSAKDDAAGLQISNRLQSQMSGLDVAVRNANDGISIMQTAEGAMNEVTNIMQRMRDLSLQSANGSNSQVERTALQEEVTALNDELNRIAETTSFGGRKLLNGAFGKSSFQIGAASGEAVQIELKSMRTDGLEMGGFSYVAQGRADSDWQVKENANDLTMSFINRSGETEKIQINAKSGDDIEELATYINGQTDKVTASVNEKGQLQIFMAGEDTAGTISFSGDLASELGMSLKGYDAVNNLNITTVGGAQQAVAVLDTAMKFVDSQRAELGAYQNRFNHAINNLDNIHENLAASNSRIQDTDYAKETTQMVKQQILQQVSTTILAQAKQAPNLALTLLG.

2 coiled-coil regions span residues 98–131 (QSANGSNSQVERTALQEEVTALNDELNRIAETTS) and 302–339 (DSQRAELGAYQNRFNHAINNLDNIHENLAASNSRIQDT).

It belongs to the bacterial flagellin family. Heteromer of multiple flagellin subunits including FlaA, FlaB/D, FlaC, FlaE and FlaF.

It is found in the secreted. The protein localises to the bacterial flagellum. In terms of biological role, flagellin is the subunit protein which polymerizes to form the filaments of bacterial flagella. The protein is Polar flagellin F (flaF) of Vibrio parahaemolyticus serotype O3:K6 (strain RIMD 2210633).